The following is a 139-amino-acid chain: Nucleoside diphosphate kinase (139 aa).

ATP-binding residues include K11, F59, R87, T93, R104, and N114. Residue H117 is the Pros-phosphohistidine intermediate of the active site.

It belongs to the NDK family. As to quaternary structure, homotetramer. Requires Mg(2+) as cofactor.

The protein resides in the cytoplasm. It catalyses the reaction a 2'-deoxyribonucleoside 5'-diphosphate + ATP = a 2'-deoxyribonucleoside 5'-triphosphate + ADP. It carries out the reaction a ribonucleoside 5'-diphosphate + ATP = a ribonucleoside 5'-triphosphate + ADP. Functionally, major role in the synthesis of nucleoside triphosphates other than ATP. The ATP gamma phosphate is transferred to the NDP beta phosphate via a ping-pong mechanism, using a phosphorylated active-site intermediate. The sequence is that of Nucleoside diphosphate kinase from Flavobacterium psychrophilum (strain ATCC 49511 / DSM 21280 / CIP 103535 / JIP02/86).